A 179-amino-acid chain; its full sequence is Large ribosomal subunit protein uL5 (179 aa).

Belongs to the universal ribosomal protein uL5 family. Part of the 50S ribosomal subunit; part of the 5S rRNA/L5/L18/L25 subcomplex. Contacts the 5S rRNA and the P site tRNA. Forms a bridge to the 30S subunit in the 70S ribosome.

This is one of the proteins that bind and probably mediate the attachment of the 5S RNA into the large ribosomal subunit, where it forms part of the central protuberance. In the 70S ribosome it contacts protein S13 of the 30S subunit (bridge B1b), connecting the 2 subunits; this bridge is implicated in subunit movement. Contacts the P site tRNA; the 5S rRNA and some of its associated proteins might help stabilize positioning of ribosome-bound tRNAs. This is Large ribosomal subunit protein uL5 from Burkholderia ambifaria (strain MC40-6).